Consider the following 215-residue polypeptide: Agamous-like MADS-box protein AGL63 (215 aa).

The region spanning 1 to 61 is the MADS-box domain; it reads MRKGKRVIKK…NRLYDFCSNS (61 aa). A K-box domain is found at 90 to 178; the sequence is CSDCVKTKES…GSSWEQLMWQ (89 aa). 2 disordered regions span residues 143–172 and 184–215; these read ARKSEFMHQQQQQQTDQKLKGKEKGQGSSW and MTCQRQKDPAPANEGGVPFLRWGTTHRRSSPP.

Forms homodimer. Interacts with AGL16. As to expression, expressed in bud pedicels, petals, anthers, style, ovary, seeds and embryos.

Its subcellular location is the nucleus. Its function is as follows. Probable transcription factor involved in the regulation of fruit growth. Contributes to integument development. Controls organ size via cell expansion. Involved in the regulation of longitudinal growth of the fruit evenly throughout the radial axis. Functions redundantly with TT16/AGL32 to repress nucellus growth and promote its degeneration. The sequence is that of Agamous-like MADS-box protein AGL63 from Arabidopsis thaliana (Mouse-ear cress).